The following is a 216-amino-acid chain: Large ribosomal subunit protein bL21 (216 aa).

Belongs to the bacterial ribosomal protein bL21 family. As to quaternary structure, part of the 50S ribosomal subunit. Contacts protein L20.

This protein binds to 23S rRNA in the presence of protein L20. This Roseobacter denitrificans (strain ATCC 33942 / OCh 114) (Erythrobacter sp. (strain OCh 114)) protein is Large ribosomal subunit protein bL21.